Consider the following 820-residue polypeptide: Leucine--tRNA ligase (820 aa).

A 'HIGH' region motif is present at residues 40–51 (PYPSGAGLHVGH). The short motif at 601–605 (KMSKS) is the 'KMSKS' region element. K604 serves as a coordination point for ATP.

Belongs to the class-I aminoacyl-tRNA synthetase family.

It localises to the cytoplasm. It catalyses the reaction tRNA(Leu) + L-leucine + ATP = L-leucyl-tRNA(Leu) + AMP + diphosphate. In Chlamydia abortus (strain DSM 27085 / S26/3) (Chlamydophila abortus), this protein is Leucine--tRNA ligase.